Here is a 433-residue protein sequence, read N- to C-terminus: Putative zinc metalloprotease BB_0118 (433 aa).

H17 lines the Zn(2+) pocket. The active site involves E18. A Zn(2+)-binding site is contributed by H21. The helical transmembrane segment at I98–S120 threads the bilayer. Positions T193–G265 constitute a PDZ domain. A run of 3 helical transmembrane segments spans residues V334–I356, L366–F388, and T401–N423.

Belongs to the peptidase M50B family. It depends on Zn(2+) as a cofactor.

It localises to the cell inner membrane. This chain is Putative zinc metalloprotease BB_0118, found in Borreliella burgdorferi (strain ATCC 35210 / DSM 4680 / CIP 102532 / B31) (Borrelia burgdorferi).